The following is a 595-amino-acid chain: E3 ubiquitin-protein ligase synoviolin B (595 aa).

The helical transmembrane segment at 1 to 19 (MTGASLALTASVVAHAYYL) threads the bilayer. At 20 to 35 (KNQFYPTVVYLTKSSP) the chain is on the lumenal side. A helical membrane pass occupies residues 36 to 56 (SMAILYIQAFVLVFLLGKFMG). Topologically, residues 57–92 (KVFFGQLRAAEMEHLLERSWYAVTETCLAFTVFRDD) are cytoplasmic. A helical transmembrane segment spans residues 93–113 (FSPRFVALFTLLLFLKCFHWL). Topologically, residues 114–129 (AEDRVDFMERSPNISW) are lumenal. Residues 130-150 (LFHFRILALMLLLGVLDAFFV) form a helical membrane-spanning segment. Over 151-163 (SHAYNSLVTRGAS) the chain is Cytoplasmic. The chain crosses the membrane as a helical span at residues 164–184 (VQLVFGFEYAILMTMILAVFI). Topologically, residues 185-218 (KYILHSVDLQSENPWDNKAVYMLYTELFTGFIKV) are lumenal. Residues 219–239 (LLYMAFMTIMVKVHTFPLFAI) traverse the membrane as a helical segment. The interaction with p53/TP53 stretch occupies residues 230–264 (KVHTFPLFAIRPMYLAMRQFKKAVTDAVMSRRAIR). The Cytoplasmic portion of the chain corresponds to 240–595 (RPMYLAMRQF…LQKLETTDSQ (356 aa)). Residues Cys-285, Cys-288, Cys-301, His-303, His-306, Cys-309, Cys-320, and Cys-323 each contribute to the Zn(2+) site. An RING-type; atypical zinc finger spans residues 285–324 (CIICREEMVSGAKRLPCNHIFHTSCLRSWFQRQQTCPTCR). The span at 335–353 (QPQTPAEQQNQHQAQQQPT) shows a compositional bias: low complexity. 2 disordered regions span residues 335-370 (QPQT…LPPF) and 386-426 (PVPG…PGAA). Residues 354 to 370 (PVVPPQPNFPPGMLPPF) show a composition bias toward pro residues. Residues 390-408 (APVGNPPDEANPGSSSGSS) are compositionally biased toward low complexity. A coiled-coil region spans residues 463-494 (EELRAMEGHERQNLEARLQCLQNIHTLLDAAM). The segment at 509–595 (PPQPPVSSSS…LQKLETTDSQ (87 aa)) is disordered. The span at 514–552 (VSSSSSSSASASTEPTTSSVSEPVIDTSSIVTTDSSQQS) shows a compositional bias: low complexity.

The protein belongs to the HRD1 family. As to quaternary structure, homodimer.

It localises to the endoplasmic reticulum membrane. The enzyme catalyses S-ubiquitinyl-[E2 ubiquitin-conjugating enzyme]-L-cysteine + [acceptor protein]-L-lysine = [E2 ubiquitin-conjugating enzyme]-L-cysteine + N(6)-ubiquitinyl-[acceptor protein]-L-lysine.. It functions in the pathway protein modification; protein ubiquitination. E3 ubiquitin-protein ligase which accepts ubiquitin specifically from endoplasmic reticulum-associated UBC7 E2 ligase and transfers it to substrates, promoting their degradation. Component of the endoplasmic reticulum quality control (ERQC) system also called ER-associated degradation (ERAD) involved in ubiquitin-dependent degradation of misfolded endoplasmic reticulum proteins. Also promotes the degradation of normal but naturally short-lived proteins. Protects cells from ER stress-induced apoptosis. Sequesters p53 in the cytoplasm and promotes its degradation, thereby negatively regulating its biological function in transcription, cell cycle regulation and apoptosis. The protein is E3 ubiquitin-protein ligase synoviolin B (syvn1-b) of Xenopus laevis (African clawed frog).